A 718-amino-acid chain; its full sequence is Telomeric repeat-binding factor 2 (718 aa).

2 disordered regions span residues 1–22 and 219–286; these read MAAK…RSDD and NSER…GAPE. Composition is skewed to basic and acidic residues over residues 8–22 and 219–228; these read AAME…RSDD and NSERAEEPKR. Residues 24–220 form a TRFH dimerization region; the sequence is EQAVNRWVLQ…LVTMMKSLNS (197 aa). 15 repeat units span residues 257 to 269, 270 to 282, 283 to 295, 296 to 308, 309 to 321, 322 to 334, 335 to 347, 348 to 360, 361 to 373, 374 to 386, 387 to 399, 400 to 412, 413 to 425, 426 to 438, and 439 to 451. Residues 257–451 are 15 X 13 AA approximate tandem repeats; it reads GTLRRAETAG…EPMKSASYPT (195 aa). 2 disordered regions span residues 342–455 and 524–641; these read TARD…ASQP and FNKL…WSDE. The span at 405–425 shows a compositional bias: basic and acidic residues; sequence AERRKDLVRAPKRAETARDVV. Over residues 533-543 the composition is skewed to polar residues; it reads PSPQQMSPSVS. The short motif at 545-550 is the Nuclear localization signal element; the sequence is RTKRRK. The span at 584 to 595 shows a compositional bias: low complexity; the sequence is SQCSKSSESPDS. The segment covering 615-630 has biased composition (polar residues); sequence PVSTKRSSQQRWNSSY. The HTH myb-type domain maps to 664-717; that stretch reads KKQKWTVQESEWIKDGVRKYGEGRWKTISEKYPFQNRTSVQIKDRYRTMKKLGI. Residues 688 to 713 constitute a DNA-binding region (H-T-H motif); sequence WKTISEKYPFQNRTSVQIKDRYRTMK.

As to quaternary structure, homodimer. Component of the shelterin complex (telosome). Interacts with TERF2IP/RAP1. As to expression, highly expressed in embryo.

Its subcellular location is the nucleus. It is found in the chromosome. The protein resides in the telomere. Functionally, binds the telomeric double-stranded 5'-TTAGGG-3' repeat and plays a central role in telomere maintenance and protection against end-to-end fusion of chromosomes. In addition to its telomeric DNA-binding role, required to recruit a number of factors and enzymes required for telomere protection, including the shelterin complex, TERF2IP/RAP1 and DCLRE1B/Apollo. Component of the shelterin complex (telosome) that is involved in the regulation of telomere length and protection. Shelterin associates with arrays of double-stranded 5'-TTAGGG-3' repeats added by telomerase and protects chromosome ends; without its protective activity, telomeres are no longer hidden from the DNA damage surveillance and chromosome ends are inappropriately processed by DNA repair pathways. Together with DCLRE1B/Apollo, plays a key role in telomeric loop (T loop) formation by generating 3' single-stranded overhang at the leading end telomeres: T loops have been proposed to protect chromosome ends from degradation and repair. Required both to recruit DCLRE1B/Apollo to telomeres and activate the exonuclease activity of DCLRE1B/Apollo. Together with DCLRE1B/Apollo, required to control the amount of DNA topoisomerase (TOP1, TOP2A and TOP2B) needed for telomere replication during fork passage and prevent aberrant telomere topology. Recruits TERF2IP/RAP1 to telomeres, thereby participating in to repressing homology-directed repair (HDR), which can affect telomere length. This is Telomeric repeat-binding factor 2 (TERF2) from Gallus gallus (Chicken).